The primary structure comprises 34 residues: ISCTGSKQCYDPCKKKTGCPNAKCMNKSCXCYGC.

Cystine bridges form between cysteine 3/cysteine 24, cysteine 9/cysteine 29, cysteine 13/cysteine 31, and cysteine 19/cysteine 34. Residue cysteine 34 is modified to Cysteine amide.

In terms of processing, contains 4 disulfide bonds. As to expression, expressed by the venom gland.

It is found in the secreted. Functionally, binds to voltage-gated potassium channels Kv1.3/KCNA3 (IC(50)=0.48 uM) and Kv1.1/KCNA1 (IC(50)=6.7 uM) and inhibits channel activity. The sequence is that of Potassium channel toxin alpha-KTx 6 hetlaxin from Heterometrus laoticus (Thai giant scorpion).